The primary structure comprises 187 residues: Holliday junction branch migration complex subunit RuvA (187 aa).

A domain I region spans residues 1 to 64 (MIEYIRGIIE…EDGFQIFGFK (64 aa)). Residues 65-136 (RKEELELFEK…ELKDKVPKEV (72 aa)) form a domain II region. The interval 136–139 (VVVP) is flexible linker. Residues 140–187 (KEDSLLNEALEALLALGYTKSEAIYALSDVNCESVEQAVKEALKKLAK) are domain III.

The protein belongs to the RuvA family. In terms of assembly, homotetramer. Forms an RuvA(8)-RuvB(12)-Holliday junction (HJ) complex. HJ DNA is sandwiched between 2 RuvA tetramers; dsDNA enters through RuvA and exits via RuvB. An RuvB hexamer assembles on each DNA strand where it exits the tetramer. Each RuvB hexamer is contacted by two RuvA subunits (via domain III) on 2 adjacent RuvB subunits; this complex drives branch migration. In the full resolvosome a probable DNA-RuvA(4)-RuvB(12)-RuvC(2) complex forms which resolves the HJ.

It is found in the cytoplasm. Functionally, the RuvA-RuvB-RuvC complex processes Holliday junction (HJ) DNA during genetic recombination and DNA repair, while the RuvA-RuvB complex plays an important role in the rescue of blocked DNA replication forks via replication fork reversal (RFR). RuvA specifically binds to HJ cruciform DNA, conferring on it an open structure. The RuvB hexamer acts as an ATP-dependent pump, pulling dsDNA into and through the RuvAB complex. HJ branch migration allows RuvC to scan DNA until it finds its consensus sequence, where it cleaves and resolves the cruciform DNA. This chain is Holliday junction branch migration complex subunit RuvA, found in Caldanaerobacter subterraneus subsp. tengcongensis (strain DSM 15242 / JCM 11007 / NBRC 100824 / MB4) (Thermoanaerobacter tengcongensis).